The sequence spans 321 residues: Basic leucine zipper 34 (321 aa).

Positions 97-189 (TDDDNLHSNP…SGNRILDPKR (93 aa)) are disordered. 3 stretches are compositionally biased toward low complexity: residues 110–133 (NNKN…NSFN), 145–155 (NMNNNINNNYN), and 172–182 (SNNNSGDSSGN). In terms of domain architecture, bZIP spans 186-238 (DPKRVKRILANRQSAQRSRVRKLQYISELERSVTSLQAEVSVLSPRVAFLDHQ). The interval 188–207 (KRVKRILANRQSAQRSRVRK) is basic motif. The tract at residues 214–235 (LERSVTSLQAEVSVLSPRVAFL) is leucine-zipper.

Forms heterodimers with BZIP18, BZIP43 and VIP1/BZIP51. Expressed in vascular tissues of leaves, stems and siliques, anthers, filaments, tapetum, mature pollen grains, pistil vascular tissues and papillar cells, and funiculi.

The protein localises to the nucleus. In terms of biological role, transcriptional activator involved in the sporophytic control of cell wall patterning and gametophytic control of pollen development. May play a role in the control of metabolic pathways regulating cellular transport and lipid metabolism. This Arabidopsis thaliana (Mouse-ear cress) protein is Basic leucine zipper 34.